Here is a 324-residue protein sequence, read N- to C-terminus: Short chain dehydrogenase/reductase dmxR8 (324 aa).

NADP(+) is bound by residues L33, K58, D83, and N110. Catalysis depends on S163, which acts as the Proton donor. NADP(+) is bound by residues Y200 and K204. Catalysis depends on Y200, which acts as the Proton acceptor. K204 (lowers pKa of active site Tyr) is an active-site residue.

The protein belongs to the short-chain dehydrogenases/reductases (SDR) family.

It functions in the pathway secondary metabolite biosynthesis. Functionally, short chain dehydrogenase; part of the gene cluster that mediates the biosynthesis of the dimeric xanthones cryptosporioptides. The pathway begins with the synthesis of atrochrysone thioester by the polyketide synthase dmx-nrPKS. The atrochrysone carboxyl ACP thioesterase dmxR1 then breaks the thioester bond and releases the atrochrysone carboxylic acid from dmx-nrPKS. Atrochrysone carboxylic acid is decarboxylated by the decarboxylase dmxR15, and oxidized by the anthrone oxygenase dmxR16 to yield emodin. Emodin is then reduced to emodin hydroquinone by the oxidoreductase dmxR7. A-ring reduction by the short chain dehydrogenase dmxR18, dehydration by the scytalone dehydratase-like protein dmxR17 and probable spontaneous re-oxidation, results in overall deoxygenation to chrysophanol. Baeyer-Villiger oxidation by the Baeyer-Villiger monooxygenase (BVMO) dmxR6 then yields monodictylactone in equilibrium with monodictyphenone. In the case of the cryptosporioptides biosynthesis, monodictylactone is reduced at C-12 to an alcohol (by the short chain dehydrogenases dmxR12 or dmxR8) and hydroxylated at C-5 by dmxR9, yielding the electron-rich aromatic which could eliminate H(2)O to form the ortho-quinonemethide, followed by tautomerisation to paraquinone and complete the formal reduction to produce the 10-methylgroup. Conjugate addition of C-4a-OH to the resulting paraquinone by the monooxygenase dmxR10 then gives cyclohexadienone, which is then reduced at C-5 by the short chain dehydrogenase dmxR3 to give the dihydroxanthone. The 6,7-epoxide in the cryptosporioptides could be introduced by the cytochrome P450 monooxygenase dmxL3. The highly reducing PKS dmxL2 manufactures butyrate, which is further carboxylated by dmxL1 to form ethylmalonate. It is not yet clear whether the carboxylation occurs while the butyrate is attached to the ACP of dmxL2, but this unusual fungal metabolite could then be esterified to O-5 by the O-acetyltransferase dmxR13. Finally, dimerization performed by dmxR5 gives the observed dimers cryptosporioptides A, B and C as the final products of the pathway. This chain is Short chain dehydrogenase/reductase dmxR8, found in Cryptosporiopsis sp. (strain 8999).